A 372-amino-acid chain; its full sequence is Ciliary neurotrophic factor receptor subunit alpha (372 aa).

Residues 1 to 22 (MAAPVPWACCAVLAAAAAVVYA) form the signal peptide. Residues 27-104 (PQEAPHVQYE…WHLRHQVLLH (78 aa)) form the Ig-like C2-type domain. An intrachain disulfide couples cysteine 46 to cysteine 89. Asparagine 60, asparagine 70, asparagine 142, and asparagine 190 each carry an N-linked (GlcNAc...) asparagine glycan. Fibronectin type-III domains follow at residues 108–205 (PPRE…VKPD) and 206–306 (PPEN…TEEP). A WSXWS motif motif is present at residues 290-294 (WSDWS). Residues 301-340 (PWTEEPRHLTTEAQAAETTTSTTSSLAPPPTTKICDPGEL) form a disordered region. Residues 311–326 (TEAQAAETTTSTTSSL) show a composition bias toward low complexity. Serine 342 carries the GPI-anchor amidated serine lipid modification. Positions 343 to 372 (GGGPSAPFLVSVPITLALAAAAATASSLLI) are cleaved as a propeptide — removed in mature form.

The protein belongs to the type I cytokine receptor family. Type 3 subfamily. Forms a heterotrimer with LIFR and IL6ST. Interacts with heterodimeric neurotropic cytokine composed of CLCF1/CLC and CRLF1/CLF-1. Either alone or in complex with the heterodimer CLCF1-CRLF1 interacts with SORL1; this interaction may promote internalization and lysosomal degradation. Component of a receptor complex composed of IL6ST/GP130, IL27RA/WSX1 and CNTFR which interacts with the neuroprotective peptide humanin. In terms of tissue distribution, nervous system and skeletal muscle.

The protein resides in the cell membrane. In terms of biological role, binds to CNTF. The alpha subunit provides the receptor specificity. Receptor for heterodimeric neurotropic cytokine composed of CLCF1/CLC and CRLF1/CLF-1. Acts as a receptor for the neuroprotective peptide humanin as part of a complex with IL6ST/GP130 and IL27RA/WSX1. The sequence is that of Ciliary neurotrophic factor receptor subunit alpha (CNTFR) from Homo sapiens (Human).